Consider the following 1435-residue polypeptide: DNA polymerase III PolC-type (1435 aa).

One can recognise an Exonuclease domain in the interval 420-576 (YVVFDVETTG…YDTEATGYLL (157 aa)).

It belongs to the DNA polymerase type-C family. PolC subfamily.

Its subcellular location is the cytoplasm. It catalyses the reaction DNA(n) + a 2'-deoxyribonucleoside 5'-triphosphate = DNA(n+1) + diphosphate. Functionally, required for replicative DNA synthesis. This DNA polymerase also exhibits 3' to 5' exonuclease activity. This chain is DNA polymerase III PolC-type, found in Bacillus cereus (strain ATCC 14579 / DSM 31 / CCUG 7414 / JCM 2152 / NBRC 15305 / NCIMB 9373 / NCTC 2599 / NRRL B-3711).